Consider the following 131-residue polypeptide: Calvin cycle protein CP12-2, chloroplastic (131 aa).

A chloroplast-targeting transit peptide spans 1 to 53 (MATIATGLNIATQRVFVTSENRPVCLAGPVHLNNSWNLGSRTTNRMMKLQPIK). 2 disulfide bridges follow: Cys-75–Cys-84 and Cys-117–Cys-126. A disordered region spans residues 97–131 (AASHARDKKKADGSDPLEEYCKDNPETNECRTYDN). Over residues 105 to 131 (KKADGSDPLEEYCKDNPETNECRTYDN) the composition is skewed to basic and acidic residues.

Belongs to the CP12 family. Monomer. Component of a complex that contains two dimers of PRK, two tetramers of GAPDH and CP12. CP12 associates with GAPDH, causing its conformation to change. This GAPDH/CP12 complex binds PRK to form a half-complex (one unit). This unit probably dimerizes due partially to interactions between the enzymes of each unit. Contains two disulfide bonds; only the oxidized protein, with two disulfide bonds, is active in complex formation. The C-terminal disulfide is involved in the interaction with GAPDH and the N-terminal disulfide mediates the binding of PRK with this binary complex. In terms of tissue distribution, mostly expressed in cotyledons, leaves and flower stalks, and, to a lower extent, in flowers and stems. Barely detectable in roots and siliques.

It localises to the plastid. It is found in the chloroplast. Acts as a linker essential in the assembly of a core complex of PRK/GAPDH. Coordinates the reversible inactivation of chloroplast enzymes GAPDH and PRK during darkness in photosynthetic tissues. This Arabidopsis thaliana (Mouse-ear cress) protein is Calvin cycle protein CP12-2, chloroplastic (CP12-2).